We begin with the raw amino-acid sequence, 748 residues long: Proton-associated sugar transporter A (748 aa).

The next 6 membrane-spanning stretches (helical) occupy residues 93–113 (ILFG…PVLL), 123–143 (SLVW…LGAW), 155–175 (RPFI…LLNG), 191–211 (WGLL…DSAD), 233–253 (IHAL…GIHW), and 268–288 (VIYL…LVSI). The segment at 294–339 (RPPSEKRAAMKSPSLPLPPSPPVLPEEGPGDSLPSHTATNFSSPIS) is disordered. Residues 308–317 (LPLPPSPPVL) show a composition bias toward pro residues. Position 497 is a phosphothreonine (threonine 497). 6 helical membrane passes run 533 to 553 (GWLS…EVVF), 573 to 593 (VTMG…YSAI), 600 to 620 (FLSV…GTGL), 627 to 647 (LYVV…LCTL), 685 to 705 (FLAQ…VGSA), and 708 to 728 (VMYF…LFVI).

This sequence belongs to the glycoside-pentoside-hexuronide (GPH) cation symporter transporter (TC 2.A.2) family. As to expression, expressed in adult heart, brain, muscle and kidney, with very strong expression in brain. Also expressed in fetal brain, kidney and lung.

The protein resides in the membrane. It catalyses the reaction D-galactose(in) + H(+)(in) = D-galactose(out) + H(+)(out). It carries out the reaction D-glucose(out) + H(+)(out) = D-glucose(in) + H(+)(in). Functionally, proton-associated glucose transporter in the brain. The chain is Proton-associated sugar transporter A from Homo sapiens (Human).